A 338-amino-acid polypeptide reads, in one-letter code: tRNA N6-adenosine threonylcarbamoyltransferase (338 aa).

Fe cation contacts are provided by His110 and His114. Substrate contacts are provided by residues 132–136, Asp165, Gly178, and Asn274; that span reads ILSGG. Fe cation is bound at residue Asp298.

The protein belongs to the KAE1 / TsaD family. Requires Fe(2+) as cofactor.

The protein localises to the cytoplasm. It carries out the reaction L-threonylcarbamoyladenylate + adenosine(37) in tRNA = N(6)-L-threonylcarbamoyladenosine(37) in tRNA + AMP + H(+). Functionally, required for the formation of a threonylcarbamoyl group on adenosine at position 37 (t(6)A37) in tRNAs that read codons beginning with adenine. Is involved in the transfer of the threonylcarbamoyl moiety of threonylcarbamoyl-AMP (TC-AMP) to the N6 group of A37, together with TsaE and TsaB. TsaD likely plays a direct catalytic role in this reaction. The sequence is that of tRNA N6-adenosine threonylcarbamoyltransferase from Borrelia hermsii (strain HS1 / DAH).